Reading from the N-terminus, the 157-residue chain is ATP synthase subunit b' (157 aa).

The helical transmembrane segment at Ala22–Phe42 threads the bilayer.

Belongs to the ATPase B chain family. As to quaternary structure, F-type ATPases have 2 components, F(1) - the catalytic core - and F(0) - the membrane proton channel. F(1) has five subunits: alpha(3), beta(3), gamma(1), delta(1), epsilon(1). F(0) has four main subunits: a(1), b(1), b'(1) and c(10-14). The alpha and beta chains form an alternating ring which encloses part of the gamma chain. F(1) is attached to F(0) by a central stalk formed by the gamma and epsilon chains, while a peripheral stalk is formed by the delta, b and b' chains.

The protein resides in the cellular thylakoid membrane. Its function is as follows. F(1)F(0) ATP synthase produces ATP from ADP in the presence of a proton or sodium gradient. F-type ATPases consist of two structural domains, F(1) containing the extramembraneous catalytic core and F(0) containing the membrane proton channel, linked together by a central stalk and a peripheral stalk. During catalysis, ATP synthesis in the catalytic domain of F(1) is coupled via a rotary mechanism of the central stalk subunits to proton translocation. Functionally, component of the F(0) channel, it forms part of the peripheral stalk, linking F(1) to F(0). The b'-subunit is a diverged and duplicated form of b found in plants and photosynthetic bacteria. In Synechococcus sp. (strain JA-3-3Ab) (Cyanobacteria bacterium Yellowstone A-Prime), this protein is ATP synthase subunit b'.